A 387-amino-acid polypeptide reads, in one-letter code: Protein RecA (387 aa).

Residue 78–85 coordinates ATP; that stretch reads GPESSGKT. The segment covering 350–369 has biased composition (basic and acidic residues); it reads QTREVKSIERDPKETKETKS. The disordered stretch occupies residues 350–387; that stretch reads QTREVKSIERDPKETKETKSKQPVSFSTEAEVDIAVGE.

Belongs to the RecA family.

The protein localises to the cytoplasm. Its function is as follows. Can catalyze the hydrolysis of ATP in the presence of single-stranded DNA, the ATP-dependent uptake of single-stranded DNA by duplex DNA, and the ATP-dependent hybridization of homologous single-stranded DNAs. It interacts with LexA causing its activation and leading to its autocatalytic cleavage. The protein is Protein RecA of Leptospira meyeri.